The chain runs to 126 residues: Small ribosomal subunit protein uS11 (126 aa).

It belongs to the universal ribosomal protein uS11 family. As to quaternary structure, part of the 30S ribosomal subunit.

Functionally, located on the platform of the 30S subunit. The polypeptide is Small ribosomal subunit protein uS11 (Methanosarcina mazei (strain ATCC BAA-159 / DSM 3647 / Goe1 / Go1 / JCM 11833 / OCM 88) (Methanosarcina frisia)).